Reading from the N-terminus, the 504-residue chain is Maturase K (504 aa).

It belongs to the intron maturase 2 family. MatK subfamily.

The protein resides in the plastid. It is found in the chloroplast. In terms of biological role, usually encoded in the trnK tRNA gene intron. Probably assists in splicing its own and other chloroplast group II introns. The sequence is that of Maturase K from Quercus lyrata (Overcup oak).